Reading from the N-terminus, the 103-residue chain is A-type ATP synthase subunit F (103 aa).

This sequence belongs to the V-ATPase F subunit family. In terms of assembly, has multiple subunits with at least A(3), B(3), C, D, E, F, H, I and proteolipid K(x).

The protein resides in the cell membrane. Functionally, component of the A-type ATP synthase that produces ATP from ADP in the presence of a proton gradient across the membrane. This is A-type ATP synthase subunit F from Pyrococcus furiosus (strain ATCC 43587 / DSM 3638 / JCM 8422 / Vc1).